A 383-amino-acid chain; its full sequence is MNSTSFSQVENHSIYYNFSEKNSRFLAFENDDCHLPLAMIFTLALAYGAVIILGVSGNLALIIIILKQKEMRNVTNILIVNLSFSDLLVAIMCLPFTFVYTLMDHWVFGEAMCKLNPFVQCVSITVSIFSLVLIAVERHQLIINPRGWRPNNRHAYVGIAVIWVLAVASSLPFLIYQVLTDEPFQNVTLDAFKDKYVCFDKFPSDSHRLSYTTLLLVLQYFGPLCFIFICYFKIYVRLKRRNSMMDKMRDNKYRSSEAKRINIMLLSIVVAFAVCWLPLTIFNTVFDWDHQIIATCNHNLLFLLCHLTAMISTCVNPIFYGFLNKNFQRDLQFFFSFCDFRSRDDDYETIAMSTMHTDVSKTSLKQASPVALKKIHTDDNEKI.

Topologically, residues 1–44 (MNSTSFSQVENHSIYYNFSEKNSRFLAFENDDCHLPLAMIFTLA) are extracellular. N2, N11, and N17 each carry an N-linked (GlcNAc...) asparagine glycan. The chain crosses the membrane as a helical span at residues 45-65 (LAYGAVIILGVSGNLALIIII). Topologically, residues 66-76 (LKQKEMRNVTN) are cytoplasmic. Residues 77 to 97 (ILIVNLSFSDLLVAIMCLPFT) traverse the membrane as a helical segment. Over 98 to 116 (FVYTLMDHWVFGEAMCKLN) the chain is Extracellular. A disulfide bridge connects residues C113 and C198. A helical membrane pass occupies residues 117 to 137 (PFVQCVSITVSIFSLVLIAVE). Over 138-154 (RHQLIINPRGWRPNNRH) the chain is Cytoplasmic. A helical membrane pass occupies residues 155–175 (AYVGIAVIWVLAVASSLPFLI). Residues 176–211 (YQVLTDEPFQNVTLDAFKDKYVCFDKFPSDSHRLSY) lie on the Extracellular side of the membrane. The N-linked (GlcNAc...) asparagine glycan is linked to N186. A helical membrane pass occupies residues 212 to 232 (TTLLLVLQYFGPLCFIFICYF). At 233–260 (KIYVRLKRRNSMMDKMRDNKYRSSEAKR) the chain is on the cytoplasmic side. The chain crosses the membrane as a helical span at residues 261 to 281 (INIMLLSIVVAFAVCWLPLTI). Topologically, residues 282–299 (FNTVFDWDHQIIATCNHN) are extracellular. A helical membrane pass occupies residues 300 to 320 (LLFLLCHLTAMISTCVNPIFY). The Cytoplasmic segment spans residues 321 to 383 (GFLNKNFQRD…KIHTDDNEKI (63 aa)). A lipid anchor (S-palmitoyl cysteine) is attached at C338. Position 368 is a phosphoserine (S368).

It belongs to the G-protein coupled receptor 1 family.

It is found in the cell membrane. Its function is as follows. Receptor for neuropeptide Y and peptide YY. In Bos taurus (Bovine), this protein is Neuropeptide Y receptor type 1 (NPY1R).